Here is a 520-residue protein sequence, read N- to C-terminus: Cytosol aminopeptidase (520 aa).

The Zn(2+) site is built by Leu-200, Met-201, Lys-280, and Asp-285. Substrate contacts are provided by Lys-280, Asp-285, Ser-290, and Lys-292. Asp-285 provides a ligand contact to Mg(2+). Lys-292 is an active-site residue. Arg-301, Asp-303, Asp-362, and Glu-364 together coordinate Zn(2+). Substrate-binding residues include Asp-303 and Asp-362. Mg(2+)-binding residues include Asp-362 and Glu-364. Residue Arg-366 is part of the active site.

It belongs to the peptidase M17 family. In terms of assembly, homohexamer. The cofactor is Zn(2+). Mn(2+) is required as a cofactor.

The protein resides in the cytoplasm. The enzyme catalyses Release of an N-terminal amino acid, Xaa-|-Yaa-, in which Xaa is preferably Leu, but may be other amino acids including Pro although not Arg or Lys, and Yaa may be Pro. Amino acid amides and methyl esters are also readily hydrolyzed, but rates on arylamides are exceedingly low.. It catalyses the reaction an S-substituted L-cysteinylglycine + H2O = an S-substituted L-cysteine + glycine. The catalysed reaction is L-cysteinylglycine + H2O = L-cysteine + glycine. It carries out the reaction S-benzyl-L-cysteinylglycine + H2O = S-benzyl-L-cysteine + glycine. The enzyme catalyses Release of N-terminal proline from a peptide.. In terms of biological role, cytosolic metallopeptidase that catalyzes the removal of unsubstituted N-terminal hydrophobic amino acids from various peptides. The presence of Zn(2+) ions is essential for the peptidase activity, and the association with other cofactors can modulate the substrate spectificity of the enzyme. For instance, in the presence of Mn(2+), it displays a specific Cys-Gly hydrolyzing activity of Cys-Gly-S-conjugates. Involved in the metabolism of glutathione and in the degradation of glutathione S-conjugates, which may play a role in the control of the cell redox status. The sequence is that of Cytosol aminopeptidase (lap3) from Xenopus tropicalis (Western clawed frog).